Reading from the N-terminus, the 339-residue chain is UDP-3-O-acylglucosamine N-acyltransferase (339 aa).

Residue H239 is the Proton acceptor of the active site.

The protein belongs to the transferase hexapeptide repeat family. LpxD subfamily. In terms of assembly, homotrimer.

It carries out the reaction a UDP-3-O-[(3R)-3-hydroxyacyl]-alpha-D-glucosamine + a (3R)-hydroxyacyl-[ACP] = a UDP-2-N,3-O-bis[(3R)-3-hydroxyacyl]-alpha-D-glucosamine + holo-[ACP] + H(+). Its pathway is bacterial outer membrane biogenesis; LPS lipid A biosynthesis. In terms of biological role, catalyzes the N-acylation of UDP-3-O-acylglucosamine using 3-hydroxyacyl-ACP as the acyl donor. Is involved in the biosynthesis of lipid A, a phosphorylated glycolipid that anchors the lipopolysaccharide to the outer membrane of the cell. The chain is UDP-3-O-acylglucosamine N-acyltransferase from Aliivibrio fischeri (strain ATCC 700601 / ES114) (Vibrio fischeri).